We begin with the raw amino-acid sequence, 124 residues long: Small ribosomal subunit protein uS12c (124 aa).

It belongs to the universal ribosomal protein uS12 family. As to quaternary structure, part of the 30S ribosomal subunit.

It is found in the plastid. Its subcellular location is the chloroplast. Its function is as follows. With S4 and S5 plays an important role in translational accuracy. Located at the interface of the 30S and 50S subunits. The protein is Small ribosomal subunit protein uS12c (rps12) of Ostreococcus tauri.